The following is a 105-amino-acid chain: EASTCGSTPYSASQVRAAANAACQYYQSDDTAGSTTYPHTYNNYEGFDFAVNGPYQEFPIRTGGVYSGGSPGADRVIINTSCQYAGAITHTGASGNNFVGCSNST.

Cystine bridges form between C5-C101 and C23-C82. H39 is an active-site residue. The Proton acceptor role is filled by E57. H90 functions as the Proton donor in the catalytic mechanism.

This sequence belongs to the ribonuclease N1/T1 family.

The catalysed reaction is [RNA] containing guanosine + H2O = an [RNA fragment]-3'-guanosine-3'-phosphate + a 5'-hydroxy-ribonucleotide-3'-[RNA fragment].. The sequence is that of Extracellular guanyl-specific ribonuclease Fl1 from Gibberella baccata (Fusarium lateritium).